The following is a 556-amino-acid chain: MTSDIEIARAATLKPMAAIAARLGIPDEAIIPFGRSKAKLSGDFIATLKDRPRGKLILVTAISPTPAGEGKTTTTVGLGDGLSRIGKKVAICLREPSLGPCFGMKGGAAGGGMAQVVPMEDINLHFTGDFHAITSAHNLLAALIDNHVHWGNEQQIDSRRIALRRVLDMNDRSLRNLVTGLGGPAHGTPREGGFDITVASEVMAILCLARDLADLEERLGDIVIAERADRSRVTARDIGAAGAMTVLLKDAFQPNLVQTLEHTPTFIHGGPFANIAHGCNTLVATDTALRLADYVVTEAGFGADLGAEKFFDIKCRKGGLEPSAAVLVATIRALKMNGGVPKDQLGAENVAAVEAGCANLGRHIENLAKFGVPVVVAINHFTADSEAEVAAVEAFCEARGVKAVLATHWAEGGQGTQKLAEAVSELVEGGSSRFAPLYPDDMPLVDKIETVAQSIYRAGSVVFERSARLQLERWQEAGYGHLPVCMAKTQYSFSADPALTGAPEGHELPVREVRLSAGAGFVVAVCGAIMTMPGLPRKPAALDIHLNAEGEVEGLF.

Position 65-72 (65-72 (TPAGEGKT)) interacts with ATP.

This sequence belongs to the formate--tetrahydrofolate ligase family.

The enzyme catalyses (6S)-5,6,7,8-tetrahydrofolate + formate + ATP = (6R)-10-formyltetrahydrofolate + ADP + phosphate. Its pathway is one-carbon metabolism; tetrahydrofolate interconversion. The protein is Formate--tetrahydrofolate ligase of Maricaulis maris (strain MCS10) (Caulobacter maris).